The chain runs to 117 residues: Large ribosomal subunit protein bL20 (117 aa).

The protein belongs to the bacterial ribosomal protein bL20 family.

Binds directly to 23S ribosomal RNA and is necessary for the in vitro assembly process of the 50S ribosomal subunit. It is not involved in the protein synthesizing functions of that subunit. The protein is Large ribosomal subunit protein bL20 of Solidesulfovibrio magneticus (strain ATCC 700980 / DSM 13731 / RS-1) (Desulfovibrio magneticus).